The sequence spans 146 residues: Large ribosomal subunit protein uL15 (146 aa).

A compositionally biased stretch (basic and acidic residues) spans 1-13; it reads MKLHELKPSEGSR. The segment at 1–54 is disordered; that stretch reads MKLHELKPSEGSRKVRNRVGRGIGSGNGKTAGKGHKGQNARSGGGVRPGFEGGQ. Gly residues-rich tracts occupy residues 21 to 31 and 42 to 52; these read RGIGSGNGKTA and SGGGVRPGFEG.

This sequence belongs to the universal ribosomal protein uL15 family. Part of the 50S ribosomal subunit.

Its function is as follows. Binds to the 23S rRNA. In Bacillus velezensis (strain DSM 23117 / BGSC 10A6 / LMG 26770 / FZB42) (Bacillus amyloliquefaciens subsp. plantarum), this protein is Large ribosomal subunit protein uL15.